The following is a 75-amino-acid chain: Protein P8 (75 aa).

Positions 19 to 47 (PMGGMPSIASSSSAETGQQTQSGNFTGGG) are disordered. Over residues 26–39 (IASSSSAETGQQTQ) the composition is skewed to polar residues. The helical transmembrane segment at 55–72 (NNQLLIVGAVVIGLFLVI) threads the bilayer.

The protein resides in the virion membrane. This is Protein P8 (VIII) from Pseudoalteromonas phage PM2 (Bacteriophage PM2).